A 382-amino-acid polypeptide reads, in one-letter code: Serine/threonine-protein kinase US3 homolog (382 aa).

Basic and acidic residues predominate over residues 1-10; that stretch reads MENKQCDHLT. Residues 1–75 form a disordered region; that stretch reads MENKQCDHLT…ASESDEDDDD (75 aa). Residues 12 to 24 are compositionally biased toward polar residues; it reads WFSTTSDASESMD. The span at 45-75 shows a compositional bias: acidic residues; that stretch reads ADEDLYSDISEGDLEYSDCDSASESDEDDDD. Positions 93-379 constitute a Protein kinase domain; that stretch reads YTVIKTLTPG…AEELLSYPMF (287 aa). ATP contacts are provided by residues 99-107 and lysine 122; that span reads LTPGSEGRV. The active-site Proton acceptor is aspartate 207.

This sequence belongs to the protein kinase superfamily. Ser/Thr protein kinase family. Post-translationally, phosphorylated by protein 49; this phosphorylation regulates subsequent phosphorylation of proteins 26 and 29 by US3 homolog. Autophosphorylated.

The protein localises to the host cytoplasm. It localises to the host nucleus. The enzyme catalyses L-seryl-[protein] + ATP = O-phospho-L-seryl-[protein] + ADP + H(+). It catalyses the reaction L-threonyl-[protein] + ATP = O-phospho-L-threonyl-[protein] + ADP + H(+). Functionally, multifunctional serine/threonine kinase that plays a role in several processes including egress of virus particles from the nucleus, modulation of the actin cytoskeleton and inhibition of apoptosis. Phosphorylates protein 26 and 29, two critical regulators of capsid budding from nucleus to endoplasmic reticulum, thereby facilitating virion egress. Modulates and redistributes host components of the nuclear envelope, including LMNA, emerin/EMD and the nuclear matrix protein MATR3. Phosphorylates envelope glycoprotein B (gB), probably to direct it to the cell surface. Promotes virus intracellular spread by restructuring host cell cytoskeleton. Blocks host apoptosis to extend cell survival and allow efficient viral replication. Promotes viral gene expression by phosphorylating host HDAC2 to reduce viral genome silencing. In Equine herpesvirus 1 (strain Ab4p) (EHV-1), this protein is Serine/threonine-protein kinase US3 homolog.